Consider the following 440-residue polypeptide: tRNA (guanine(37)-N(1))-methyltransferase (440 aa).

Residues His-217, 255-256, 283-284, and Asn-315 contribute to the S-adenosyl-L-methionine site; these read DL and DG.

It belongs to the class I-like SAM-binding methyltransferase superfamily. TRM5/TYW2 family. As to quaternary structure, monomer.

Its subcellular location is the mitochondrion matrix. It localises to the nucleus. It is found in the cytoplasm. The enzyme catalyses guanosine(37) in tRNA + S-adenosyl-L-methionine = N(1)-methylguanosine(37) in tRNA + S-adenosyl-L-homocysteine + H(+). Specifically methylates the N1 position of guanosine-37 in various cytoplasmic and mitochondrial tRNAs. Methylation is not dependent on the nature of the nucleoside 5' of the target nucleoside. This is the first step in the biosynthesis of wybutosine (yW), a modified base adjacent to the anticodon of tRNAs and required for accurate decoding. The protein is tRNA (guanine(37)-N(1))-methyltransferase of Drosophila pseudoobscura pseudoobscura (Fruit fly).